Here is a 273-residue protein sequence, read N- to C-terminus: 3-methyl-2-oxobutanoate hydroxymethyltransferase 3 (273 aa).

Mg(2+) contacts are provided by Asp-49 and Asp-88. Residues 49-50 (DS), Asp-88, and Lys-118 each bind 3-methyl-2-oxobutanoate. Glu-120 contributes to the Mg(2+) binding site. Glu-187 functions as the Proton acceptor in the catalytic mechanism.

It belongs to the PanB family. In terms of assembly, homodecamer; pentamer of dimers. The cofactor is Mg(2+).

The protein localises to the cytoplasm. It catalyses the reaction 3-methyl-2-oxobutanoate + (6R)-5,10-methylene-5,6,7,8-tetrahydrofolate + H2O = 2-dehydropantoate + (6S)-5,6,7,8-tetrahydrofolate. It participates in cofactor biosynthesis; (R)-pantothenate biosynthesis; (R)-pantoate from 3-methyl-2-oxobutanoate: step 1/2. Catalyzes the reversible reaction in which hydroxymethyl group from 5,10-methylenetetrahydrofolate is transferred onto alpha-ketoisovalerate to form ketopantoate. The chain is 3-methyl-2-oxobutanoate hydroxymethyltransferase 3 from Bradyrhizobium diazoefficiens (strain JCM 10833 / BCRC 13528 / IAM 13628 / NBRC 14792 / USDA 110).